The chain runs to 312 residues: Ribonuclease HIII (312 aa).

Residues 95-311 (FNCIGSDEAG…REKAQKILKP (217 aa)) enclose the RNase H type-2 domain. The a divalent metal cation site is built by D101, E102, and D206.

Belongs to the RNase HII family. RnhC subfamily. The cofactor is Mn(2+). Mg(2+) is required as a cofactor.

The protein localises to the cytoplasm. It carries out the reaction Endonucleolytic cleavage to 5'-phosphomonoester.. Functionally, endonuclease that specifically degrades the RNA of RNA-DNA hybrids. The protein is Ribonuclease HIII of Staphylococcus aureus (strain MW2).